We begin with the raw amino-acid sequence, 126 residues long: Large ribosomal subunit protein bL17 (126 aa).

The protein belongs to the bacterial ribosomal protein bL17 family. Part of the 50S ribosomal subunit. Contacts protein L32.

The protein is Large ribosomal subunit protein bL17 of Laribacter hongkongensis (strain HLHK9).